The chain runs to 309 residues: Homoserine kinase (309 aa).

ATP is bound at residue 91–101; that stretch reads PIGSGLGSSAC.

It belongs to the GHMP kinase family. Homoserine kinase subfamily.

Its subcellular location is the cytoplasm. The catalysed reaction is L-homoserine + ATP = O-phospho-L-homoserine + ADP + H(+). It functions in the pathway amino-acid biosynthesis; L-threonine biosynthesis; L-threonine from L-aspartate: step 4/5. In terms of biological role, catalyzes the ATP-dependent phosphorylation of L-homoserine to L-homoserine phosphate. The chain is Homoserine kinase from Serratia proteamaculans (strain 568).